A 312-amino-acid chain; its full sequence is Acetylglutamate kinase (312 aa).

Substrate contacts are provided by residues 77-78, Arg-99, and Asn-192; that span reads GG.

The protein belongs to the acetylglutamate kinase family. ArgB subfamily.

Its subcellular location is the cytoplasm. It catalyses the reaction N-acetyl-L-glutamate + ATP = N-acetyl-L-glutamyl 5-phosphate + ADP. It participates in amino-acid biosynthesis; L-arginine biosynthesis; N(2)-acetyl-L-ornithine from L-glutamate: step 2/4. Catalyzes the ATP-dependent phosphorylation of N-acetyl-L-glutamate. The chain is Acetylglutamate kinase from Synechococcus sp. (strain JA-2-3B'a(2-13)) (Cyanobacteria bacterium Yellowstone B-Prime).